Reading from the N-terminus, the 79-residue chain is ATP synthase subunit 9, mitochondrial (79 aa).

2 helical membrane passes run 21–41 and 59–79; these read SGLI…ILAF and FALT…ILFI.

The protein belongs to the ATPase C chain family. In terms of assembly, F-type ATPases have 2 components, CF(1) - the catalytic core - and CF(0) - the membrane proton channel. CF(1) has five subunits: alpha(3), beta(3), gamma(1), delta(1), epsilon(1). CF(0) has three main subunits: a, b and c.

Its subcellular location is the mitochondrion membrane. Mitochondrial membrane ATP synthase (F(1)F(0) ATP synthase or Complex V) produces ATP from ADP in the presence of a proton gradient across the membrane which is generated by electron transport complexes of the respiratory chain. F-type ATPases consist of two structural domains, F(1) - containing the extramembraneous catalytic core and F(0) - containing the membrane proton channel, linked together by a central stalk and a peripheral stalk. During catalysis, ATP synthesis in the catalytic domain of F(1) is coupled via a rotary mechanism of the central stalk subunits to proton translocation. Part of the complex F(0) domain. A homomeric c-ring of probably 10 subunits is part of the complex rotary element. This Acanthamoeba castellanii (Amoeba) protein is ATP synthase subunit 9, mitochondrial (ATP9).